Here is a 264-residue protein sequence, read N- to C-terminus: Forkhead box protein pes-1 (264 aa).

2 disordered regions span residues 15 to 36 (DLDN…GNSK) and 50 to 93 (DSST…PTKR). Residues 50 to 64 (DSSTSSSCSVSPASS) are compositionally biased toward low complexity. Residues 70-89 (ESVGQQQSGRNSPVSSSTES) are compositionally biased toward polar residues. Residues 93–186 (RPKYSYNALI…ISNNCGKLRR (94 aa)) constitute a DNA-binding region (fork-head).

The protein localises to the nucleus. It localises to the cytoplasm. Its function is as follows. Transcription factor. Plays a role in embryogenesis and later development, perhaps acting redundantly with forkhead protein fkh-2. The sequence is that of Forkhead box protein pes-1 from Caenorhabditis elegans.